We begin with the raw amino-acid sequence, 457 residues long: Cysteine desulfurase (457 aa).

5 residues coordinate pyridoxal 5'-phosphate: Ala127, Thr128, Gln235, Ser255, and His257. Lys258 bears the N6-(pyridoxal phosphate)lysine mark. Residue Thr295 participates in pyridoxal 5'-phosphate binding. Cys381 serves as the catalytic Cysteine persulfide intermediate. Cys381 provides a ligand contact to [2Fe-2S] cluster. Residue Cys381 coordinates Zn(2+). Position 381 is a cysteine persulfide (Cys381).

Belongs to the class-V pyridoxal-phosphate-dependent aminotransferase family. NifS/IscS subfamily. Homodimer. Component of the mitochondrial core iron-sulfur cluster (ISC) complex composed of NFS1, LYRM4, NDUFAB1, ISCU, FXN, and FDX2; this complex is a heterohexamer containing two copies of each monomer. Component of cyteine desulfurase complex composed of NFS1, LYRM4 and NDUFAB1; this complex contributes to the activation of cysteine desulfurase activity and NFS1 stabilization. Interacts (homodimer form) with ISCU (D-state); each monomer interacts with the C-terminal regions of each NFS1 monomer. Interacts with HSPA9. Interacts (via homodimer form) with FDX2. Interacts (via homodimer form) with FXN. Interacts with LYRM4. Component of a complex composed of FXN, NFS1, LYRM4 and ISCU. As to quaternary structure, monomer. Homodimer. Oligomer. Interacts with ISCU. Component of the cysteine desulfurase complex composed of NFS1 and LYRM4; this complex contributes to the activation of cysteine desulfurase activity. Interacts with MOCS3. Pyridoxal 5'-phosphate serves as cofactor. Post-translationally, N-gluconoylated. In terms of processing, cysteine persulfide intermediate is reduced by thiol-containing molecules like glutathione and L-cysteine. Persulfide reduction is a rate-limiting step of cysteine desulfurase catalytic cycle.

The protein localises to the mitochondrion. Its subcellular location is the cytoplasm. The protein resides in the nucleus. It is found in the cytoskeleton. It localises to the microtubule organizing center. The protein localises to the centrosome. It catalyses the reaction (sulfur carrier)-H + L-cysteine = (sulfur carrier)-SH + L-alanine. The enzyme catalyses L-cysteinyl-[cysteine desulfurase] + L-cysteine = S-sulfanyl-L-cysteinyl-[cysteine desulfurase] + L-alanine. Its activity is regulated as follows. Active only in complex with LYRM4. Its function is as follows. Cysteine desulfurase, of the core iron-sulfur cluster (ISC) assembly complex, that catalyzes the desulfuration of L-cysteine to L-alanine, as component of the cysteine desulfurase complex leading to the formation of a cysteine persulfide intermediate at the active site cysteine residue and participates in the [2Fe-2S] clusters assembly on the scaffolding protein ISCU. The persulfide is then transferred on the flexible Cys loop from the catalytic site of NFS1 to the surface of NFS1. After the NFS1-linked persulfide sulfur is transferred to one of the conserved Cys residues of the scaffold, a reaction assisted by FXN. The core iron-sulfur cluster (ISC) assembly complex is involved in the de novo synthesis of a [2Fe-2S] cluster, the first step of the mitochondrial iron-sulfur protein biogenesis. This process is initiated by the cysteine desulfurase complex (NFS1:LYRM4:NDUFAB1) that produces persulfide which is delivered on the scaffold protein ISCU in a FXN-dependent manner. Then this complex is stabilized by FDX2 which provides reducing equivalents to accomplish the [2Fe-2S] cluster assembly. Finally, the [2Fe-2S] cluster is transferred from ISCU to chaperone proteins, including HSCB, HSPA9 and GLRX5. Functionally, may catalyze the desulfuration of L-cysteine to L-alanine as component of the cysteine desulfurase complex (NFS1:LYRM4), leading to the formation of a cysteine persulfide intermediate. Acts as a sulfur donor for MOCS3 by transferring the sulfur of the cysteine persulfide intermediate on MOCS3. This Pongo abelii (Sumatran orangutan) protein is Cysteine desulfurase.